The chain runs to 344 residues: Adenosine kinase 1 (344 aa).

Asp-299 is a catalytic residue.

The protein belongs to the carbohydrate kinase PfkB family. In terms of assembly, interacts with the begomovirus AL2 protein and the curtovirus L2 protein. Mg(2+) is required as a cofactor. In terms of tissue distribution, widely expressed.

It catalyses the reaction adenosine + ATP = AMP + ADP + H(+). Its pathway is purine metabolism; AMP biosynthesis via salvage pathway; AMP from adenosine: step 1/1. With respect to regulation, inactivated by the begomovirus AL2 protein or the curtovirus L2 protein. Its function is as follows. ATP dependent phosphorylation of adenosine and other related nucleoside analogs to monophosphate derivatives. Essential to sustain methyl recycling. The chain is Adenosine kinase 1 from Arabidopsis thaliana (Mouse-ear cress).